The primary structure comprises 416 residues: Gamma-glutamyl phosphate reductase (416 aa).

This sequence belongs to the gamma-glutamyl phosphate reductase family.

It is found in the cytoplasm. It catalyses the reaction L-glutamate 5-semialdehyde + phosphate + NADP(+) = L-glutamyl 5-phosphate + NADPH + H(+). It participates in amino-acid biosynthesis; L-proline biosynthesis; L-glutamate 5-semialdehyde from L-glutamate: step 2/2. Its function is as follows. Catalyzes the NADPH-dependent reduction of L-glutamate 5-phosphate into L-glutamate 5-semialdehyde and phosphate. The product spontaneously undergoes cyclization to form 1-pyrroline-5-carboxylate. This is Gamma-glutamyl phosphate reductase from Salmonella typhi.